Here is a 60-residue protein sequence, read N- to C-terminus: uncharacterized protein (60 aa).

Residues 11-33 (VFTVGFITGGVTPVMVSFVWPAA) form a helical membrane-spanning segment. N40 and N57 each carry an N-linked (GlcNAc...) asparagine; by host glycan.

It localises to the host membrane. This is an uncharacterized protein from African swine fever virus (strain Badajoz 1971 Vero-adapted) (Ba71V).